A 132-amino-acid polypeptide reads, in one-letter code: Small ribosomal subunit protein uS9 (132 aa).

This sequence belongs to the universal ribosomal protein uS9 family.

This Leptospira interrogans serogroup Icterohaemorrhagiae serovar copenhageni (strain Fiocruz L1-130) protein is Small ribosomal subunit protein uS9.